Consider the following 70-residue polypeptide: Aurein-3.1 (70 aa).

A signal peptide spans 1–22 (MAFLKKSLFLVLFLGLVSLSIC). The propeptide occupies 23-49 (EKEKRQNEEDEDENEAANHEEGSEEKR). A disordered region spans residues 27-48 (RQNEEDEDENEAANHEEGSEEK). Over residues 38 to 48 (AANHEEGSEEK) the composition is skewed to basic and acidic residues. Isoleucine amide is present on Ile-66.

As to expression, expressed by the skin dorsal glands.

The protein localises to the secreted. Its subcellular location is the target cell membrane. Its function is as follows. Amphipathic alpha-helical antimicrobial peptide with weak to potent activity against Gram-positive bacteria, and no activity against Gram-negative bacteria. Probably acts by disturbing membrane functions with its amphipathic structure. Shows anticancer activity. The protein is Aurein-3.1 of Ranoidea aurea (Green and golden bell frog).